The following is a 70-amino-acid chain: Large ribosomal subunit protein eL38 (70 aa).

The protein belongs to the eukaryotic ribosomal protein eL38 family.

The sequence is that of Large ribosomal subunit protein eL38 (rpl-38) from Ostertagia ostertagi (Brown stomach worm).